We begin with the raw amino-acid sequence, 261 residues long: Flap endonuclease Xni (261 aa).

A Mg(2+)-binding site is contributed by D105. Positions 164–256 constitute a 5'-3' exonuclease domain; the sequence is SQFLDLMALA…DFRVNSPTKA (93 aa). K(+) is bound by residues L172, A173, P181, I183, and I186. Positions 185–190 are interaction with DNA; the sequence is GIGPKS.

The protein belongs to the Xni family. Requires Mg(2+) as cofactor. The cofactor is K(+).

Its function is as follows. Has flap endonuclease activity. During DNA replication, flap endonucleases cleave the 5'-overhanging flap structure that is generated by displacement synthesis when DNA polymerase encounters the 5'-end of a downstream Okazaki fragment. The polypeptide is Flap endonuclease Xni (Shewanella oneidensis (strain ATCC 700550 / JCM 31522 / CIP 106686 / LMG 19005 / NCIMB 14063 / MR-1)).